We begin with the raw amino-acid sequence, 126 residues long: Histone H2B type 1-K (126 aa).

Residues 1–12 (MPEPAKSAPAPK) are compositionally biased toward low complexity. A disordered region spans residues 1–36 (MPEPAKSAPAPKKGSKKAVTKAQKIDGKKRKRSRKE). N-acetylproline is present on Pro-2. Residue Glu-3 is modified to ADP-ribosyl glutamic acid. N6-(2-hydroxyisobutyryl)lysine; alternate is present on Lys-6. Lys-6 carries the N6-(beta-hydroxybutyryl)lysine; alternate modification. Lys-6 is modified (N6-acetyllysine; alternate). Position 6 is an N6-butyryllysine; alternate (Lys-6). An N6-crotonyllysine; alternate modification is found at Lys-6. The residue at position 6 (Lys-6) is an N6-lactoyllysine; alternate. Lys-6 is covalently cross-linked (Glycyl lysine isopeptide (Lys-Gly) (interchain with G-Cter in SUMO2); alternate). Ser-7 carries the post-translational modification ADP-ribosylserine. Lys-12 bears the N6-(beta-hydroxybutyryl)lysine; alternate mark. N6-acetyllysine; alternate occurs at positions 12 and 13. 2 positions are modified to N6-crotonyllysine; alternate: Lys-12 and Lys-13. Lys-12 carries the post-translational modification N6-lactoyllysine; alternate. At Lys-13 the chain carries N6-(2-hydroxyisobutyryl)lysine; alternate. At Ser-15 the chain carries Phosphoserine; by STK4/MST1. An N6-acetyllysine; alternate mark is found at Lys-16, Lys-17, Lys-21, and Lys-24. Residues Lys-16, Lys-17, Lys-21, Lys-24, and Lys-35 each carry the N6-crotonyllysine; alternate modification. Residues Lys-16, Lys-17, Lys-21, and Lys-24 each carry the N6-lactoyllysine; alternate modification. An N6-glutaryllysine; alternate modification is found at Lys-17. 3 positions are modified to N6-(2-hydroxyisobutyryl)lysine; alternate: Lys-21, Lys-24, and Lys-35. Lys-21 bears the N6-(beta-hydroxybutyryl)lysine; alternate mark. An N6-butyryllysine; alternate modification is found at Lys-21. Residue Lys-21 forms a Glycyl lysine isopeptide (Lys-Gly) (interchain with G-Cter in SUMO2); alternate linkage. Position 35 is an N6-(beta-hydroxybutyryl)lysine; alternate (Lys-35). Lys-35 carries the N6-glutaryllysine; alternate modification. Lys-35 is subject to N6-succinyllysine; alternate. Lys-35 is covalently cross-linked (Glycyl lysine isopeptide (Lys-Gly) (interchain with G-Cter in ubiquitin); alternate). Glu-36 carries the post-translational modification PolyADP-ribosyl glutamic acid. Residue Ser-37 is modified to Phosphoserine; by AMPK. N6-(2-hydroxyisobutyryl)lysine; alternate occurs at positions 44, 47, and 58. Lys-44 bears the N6-lactoyllysine; alternate mark. 2 positions are modified to N6-glutaryllysine; alternate: Lys-44 and Lys-47. An N6-methyllysine; alternate modification is found at Lys-47. N6,N6-dimethyllysine; alternate is present on Lys-58. Arg-80 is subject to Dimethylated arginine. Position 86 is an N6-(2-hydroxyisobutyryl)lysine; alternate (Lys-86). Lys-86 is subject to N6-acetyllysine; alternate. Position 86 is an N6-lactoyllysine; alternate (Lys-86). Residue Lys-86 is modified to N6,N6,N6-trimethyllysine; alternate. Omega-N-methylarginine is present on residues Arg-87 and Arg-93. Lys-109 bears the N6-(2-hydroxyisobutyryl)lysine; alternate mark. An N6-lactoyllysine; alternate modification is found at Lys-109. Residue Lys-109 is modified to N6-glutaryllysine; alternate. Lys-109 is modified (N6-methyllysine; alternate). Ser-113 is a glycosylation site (O-linked (GlcNAc) serine). Thr-116 is subject to Phosphothreonine. Residues Lys-117 and Lys-121 each carry the N6-(2-hydroxyisobutyryl)lysine; alternate modification. N6-(beta-hydroxybutyryl)lysine; alternate is present on Lys-117. N6-lactoyllysine; alternate occurs at positions 117 and 121. An N6-glutaryllysine; alternate mark is found at Lys-117 and Lys-121. N6-succinyllysine; alternate is present on residues Lys-117 and Lys-121. N6-methylated lysine; alternate is present on Lys-117. A Glycyl lysine isopeptide (Lys-Gly) (interchain with G-Cter in ubiquitin); alternate cross-link involves residue Lys-121.

Belongs to the histone H2B family. In terms of assembly, the nucleosome is a histone octamer containing two molecules each of H2A, H2B, H3 and H4 assembled in one H3-H4 heterotetramer and two H2A-H2B heterodimers. The octamer wraps approximately 147 bp of DNA. Monoubiquitination at Lys-35 (H2BK34Ub) by the MSL1/MSL2 dimer is required for histone H3 'Lys-4' (H3K4me) and 'Lys-79' (H3K79me) methylation and transcription activation at specific gene loci, such as HOXA9 and MEIS1 loci. Similarly, monoubiquitination at Lys-121 (H2BK120Ub) by the RNF20/40 complex gives a specific tag for epigenetic transcriptional activation and is also prerequisite for histone H3 'Lys-4' and 'Lys-79' methylation. It also functions cooperatively with the FACT dimer to stimulate elongation by RNA polymerase II. H2BK120Ub also acts as a regulator of mRNA splicing: deubiquitination by USP49 is required for efficient cotranscriptional splicing of a large set of exons. In terms of processing, phosphorylated on Ser-15 (H2BS14ph) by STK4/MST1 during apoptosis; which facilitates apoptotic chromatin condensation. Also phosphorylated on Ser-15 in response to DNA double strand breaks (DSBs), and in correlation with somatic hypermutation and immunoglobulin class-switch recombination. Phosphorylation at Ser-37 (H2BS36ph) by AMPK in response to stress promotes transcription. Post-translationally, glcNAcylation at Ser-113 promotes monoubiquitination of Lys-121. It fluctuates in response to extracellular glucose, and associates with transcribed genes. ADP-ribosylated by PARP1 or PARP2 on Ser-7 (H2BS6ADPr) in response to DNA damage. H2BS6ADPr promotes recruitment of CHD1L. Mono-ADP-ribosylated on Glu-3 (H2BE2ADPr) by PARP3 in response to single-strand breaks. Poly ADP-ribosylation on Glu-36 (H2BE35ADPr) by PARP1 regulates adipogenesis: it inhibits phosphorylation at Ser-37 (H2BS36ph), thereby blocking expression of pro-adipogenetic genes. In terms of processing, crotonylation (Kcr) is specifically present in male germ cells and marks testis-specific genes in post-meiotic cells, including X-linked genes that escape sex chromosome inactivation in haploid cells. Crotonylation marks active promoters and enhancers and confers resistance to transcriptional repressors. It is also associated with post-meiotically activated genes on autosomes. Post-translationally, lactylated in macrophages by EP300/P300 by using lactoyl-CoA directly derived from endogenous or exogenous lactate, leading to stimulates gene transcription.

The protein localises to the nucleus. It is found in the chromosome. In terms of biological role, core component of nucleosome. Nucleosomes wrap and compact DNA into chromatin, limiting DNA accessibility to the cellular machineries which require DNA as a template. Histones thereby play a central role in transcription regulation, DNA repair, DNA replication and chromosomal stability. DNA accessibility is regulated via a complex set of post-translational modifications of histones, also called histone code, and nucleosome remodeling. This Bos taurus (Bovine) protein is Histone H2B type 1-K.